Consider the following 538-residue polypeptide: MAEYKKIVLLKGLESMEDYQFRTVKSLLRKELKLTKKLQEDYDRIQLADWMEDKFPKYAGLDKLIKVCEHIKDLKDLAKKLKTEKAKVQKKKQGKCKTAVKKKGQDELSSSESLFINKESYKSVPSSKKKGKAIAKTEGEKKNKLTQDQDHLPETSGTDIKTEEDCLQNSPKPPPTSPSSSSNKKKRKEITKTEGGKKKKLTQEQAQLPEPLGTDIKKDEDCLQTPPKPPPTPPSSSLNKKRKSRREEETGVKKSKAAKEPDQPPCCEEPTARCQSPILHSSSSASSNIPSATNQKPQPQNQNIPRGAVLHSEPLTVMVLTATDPFEYESPEHEVKNMFHATVATVSQYFHVKVFNINLKEKFTKKNFIIISNYFESKGILEINETSSVLKADPDQMIEVPNNIIRNANASPKICDIQKGTSGAVFYGVFTLHKKKVKTQNTSYEIKDGSGSIEVEGSGQWHNINCKEGDKLHLFCFHLKRERGQPKLVCGDHSFVKIKVTKAGKKKEASTVLSSTKNEEENNYPKDGIKVEMPDYHV.

Positions 1–87 (MAEYKKIVLL…AKKLKTEKAK (87 aa)) constitute a Pyrin domain. Positions 120–306 (SYKSVPSSKK…PQPQNQNIPR (187 aa)) are disordered. 2 stretches are compositionally biased toward basic and acidic residues: residues 135-153 (AKTEGEKKNKLTQDQDHLP) and 245-262 (RREEETGVKKSKAAKEPD). Low complexity predominate over residues 276 to 305 (SPILHSSSSASSNIPSATNQKPQPQNQNIP). One can recognise an HIN-200 domain in the interval 299–499 (PQNQNIPRGA…CGDHSFVKIK (201 aa)).

Belongs to the HIN-200 family. Highest expression observed in spleen and thymus with moderate levels in bone marrow, lung, skin and heart, low levels in muscle, liver and intestine and little or no expression in brain and pancreas.

It localises to the nucleus. Suppresses cell growth when expressed ectopically. The polypeptide is Myeloid cell nuclear differentiation antigen-like protein (Mus musculus (Mouse)).